The following is a 229-amino-acid chain: Non-structural protein P8 (229 aa).

The next 2 membrane-spanning stretches (helical) occupy residues Ile119–Leu139 and Ser162–Ala182.

Belongs to the orbivirus NS3 family. As to quaternary structure, forms homooligomers via coiled-coil motif. Interacts with host OPTN; this interaction inhibits innate immune response.

It is found in the host cell membrane. The protein localises to the host Golgi apparatus. Its function is as follows. Plays a role in the inhibition of host innate immune response. Interacts with host OPTN and thus inhibits the recruitment of TBK1 to the host Golgi apparatus. In turn, downstream partner IRF3 cannot be activated and IFN-beta production is impaired. Functionally, facilitates viral particle release either by increasing plasma membrane permeability through a viroporin-like activity or by viral budding. The polypeptide is Non-structural protein P8 (Segment-10) (Antilocapra americana (Pronghorn)).